A 503-amino-acid chain; its full sequence is Aspartyl/glutamyl-tRNA(Asn/Gln) amidotransferase subunit B (503 aa).

The protein belongs to the GatB/GatE family. GatB subfamily. Heterotrimer of A, B and C subunits.

It carries out the reaction L-glutamyl-tRNA(Gln) + L-glutamine + ATP + H2O = L-glutaminyl-tRNA(Gln) + L-glutamate + ADP + phosphate + H(+). The catalysed reaction is L-aspartyl-tRNA(Asn) + L-glutamine + ATP + H2O = L-asparaginyl-tRNA(Asn) + L-glutamate + ADP + phosphate + 2 H(+). Its function is as follows. Allows the formation of correctly charged Asn-tRNA(Asn) or Gln-tRNA(Gln) through the transamidation of misacylated Asp-tRNA(Asn) or Glu-tRNA(Gln) in organisms which lack either or both of asparaginyl-tRNA or glutaminyl-tRNA synthetases. The reaction takes place in the presence of glutamine and ATP through an activated phospho-Asp-tRNA(Asn) or phospho-Glu-tRNA(Gln). The chain is Aspartyl/glutamyl-tRNA(Asn/Gln) amidotransferase subunit B from Cereibacter sphaeroides (strain ATCC 17025 / ATH 2.4.3) (Rhodobacter sphaeroides).